The primary structure comprises 46 residues: Viscotoxin-A2 (46 aa).

Disulfide bonds link Cys-3-Cys-40, Cys-4-Cys-32, and Cys-16-Cys-26.

The protein belongs to the plant thionin (TC 1.C.44) family.

It localises to the secreted. Thionins are small plant proteins which are toxic to animal cells. They seem to exert their toxic effect at the level of the cell membrane. Their precise function is not known. The polypeptide is Viscotoxin-A2 (THI2.3) (Viscum album (European mistletoe)).